We begin with the raw amino-acid sequence, 66 residues long: Large ribosomal subunit protein bL31 (66 aa).

4 residues coordinate Zn(2+): Cys-16, Cys-18, Cys-36, and Cys-39.

This sequence belongs to the bacterial ribosomal protein bL31 family. Type A subfamily. Part of the 50S ribosomal subunit. Zn(2+) is required as a cofactor.

In terms of biological role, binds the 23S rRNA. This is Large ribosomal subunit protein bL31 from Geobacter metallireducens (strain ATCC 53774 / DSM 7210 / GS-15).